Here is a 302-residue protein sequence, read N- to C-terminus: Oxygen-dependent coproporphyrinogen-III oxidase (302 aa).

Ser-94 contributes to the substrate binding site. A divalent metal cation contacts are provided by His-98 and His-108. His-108 acts as the Proton donor in catalysis. 110–112 contacts substrate; that stretch reads NVR. His-147 and His-177 together coordinate a divalent metal cation. Residues 242–277 are important for dimerization; sequence YVEFNLVFDRGTLFGLQSGGRAESILMSMPPVANWR. 260 to 262 contacts substrate; it reads GGR.

This sequence belongs to the aerobic coproporphyrinogen-III oxidase family. As to quaternary structure, homodimer. A divalent metal cation serves as cofactor.

It localises to the cytoplasm. The catalysed reaction is coproporphyrinogen III + O2 + 2 H(+) = protoporphyrinogen IX + 2 CO2 + 2 H2O. It functions in the pathway porphyrin-containing compound metabolism; protoporphyrin-IX biosynthesis; protoporphyrinogen-IX from coproporphyrinogen-III (O2 route): step 1/1. Functionally, involved in the heme biosynthesis. Catalyzes the aerobic oxidative decarboxylation of propionate groups of rings A and B of coproporphyrinogen-III to yield the vinyl groups in protoporphyrinogen-IX. This Ralstonia pickettii (strain 12J) protein is Oxygen-dependent coproporphyrinogen-III oxidase.